Reading from the N-terminus, the 459-residue chain is Glycosyl hydrolase family 109 protein (459 aa).

The segment at residues 1 to 31 (MHNIHRRNFLKAAGAATAGLVTANIALNAYA) is a signal peptide (tat-type signal). Residues 64–65 (ER), aspartate 86, 135–138 (WEWH), 155–156 (EV), and asparagine 184 each bind NAD(+). Substrate-binding positions include tyrosine 213, arginine 232, 244–247 (YPTH), and tyrosine 326. Tyrosine 244 is a binding site for NAD(+).

This sequence belongs to the Gfo/Idh/MocA family. Glycosyl hydrolase 109 subfamily. NAD(+) serves as cofactor. In terms of processing, predicted to be exported by the Tat system. The position of the signal peptide cleavage has not been experimentally proven.

Functionally, glycosidase. This chain is Glycosyl hydrolase family 109 protein, found in Shewanella baltica (strain OS155 / ATCC BAA-1091).